A 230-amino-acid chain; its full sequence is Flagellar L-ring protein (230 aa).

The first 15 residues, 1 to 15 (MSRLPSLSRLCLAIA), serve as a signal peptide directing secretion. Cys16 carries the N-palmitoyl cysteine lipid modification. Cys16 is lipidated: S-diacylglycerol cysteine.

The protein belongs to the FlgH family. The basal body constitutes a major portion of the flagellar organelle and consists of four rings (L,P,S, and M) mounted on a central rod.

It localises to the cell outer membrane. It is found in the bacterial flagellum basal body. Functionally, assembles around the rod to form the L-ring and probably protects the motor/basal body from shearing forces during rotation. In Xanthomonas euvesicatoria pv. vesicatoria (strain 85-10) (Xanthomonas campestris pv. vesicatoria), this protein is Flagellar L-ring protein.